The following is a 317-amino-acid chain: Large ribosomal subunit protein uL10 (317 aa).

The tract at residues alanine 286–aspartate 317 is disordered. The span at alanine 292–glutamate 302 shows a compositional bias: basic and acidic residues.

Belongs to the universal ribosomal protein uL10 family. In terms of assembly, P0 forms a pentameric complex by interaction with dimers of P1 and P2. Post-translationally, phosphorylated.

Functionally, ribosomal protein P0 is the functional equivalent of E.coli protein L10. This is Large ribosomal subunit protein uL10 (RpLP0) from Ceratitis capitata (Mediterranean fruit fly).